A 449-amino-acid polypeptide reads, in one-letter code: NADH-quinone oxidoreductase subunit H (449 aa).

9 consecutive transmembrane segments (helical) span residues 26-46, 96-116, 136-156, 177-197, 211-231, 259-279, 298-318, 330-350, and 365-385; these read FWLI…MTLF, PIFI…FAVI, LPVS…GLIL, IISY…YAGT, WYIA…GETN, FFFL…TTLF, WVPL…FIWL, FMAF…LVIA, and WLIG…LDPG. The disordered stretch occupies residues 396–449; sequence AERRKLAEAPSLESIPWPPPPPGGAHHRPAVPAGTSANGSSTVIPADPPPRQES.

It belongs to the complex I subunit 1 family. In terms of assembly, NDH-1 is composed of 14 different subunits. Subunits NuoA, H, J, K, L, M, N constitute the membrane sector of the complex.

It is found in the cell membrane. The catalysed reaction is a quinone + NADH + 5 H(+)(in) = a quinol + NAD(+) + 4 H(+)(out). Functionally, NDH-1 shuttles electrons from NADH, via FMN and iron-sulfur (Fe-S) centers, to quinones in the respiratory chain. The immediate electron acceptor for the enzyme in this species is believed to be ubiquinone. Couples the redox reaction to proton translocation (for every two electrons transferred, four hydrogen ions are translocated across the cytoplasmic membrane), and thus conserves the redox energy in a proton gradient. This subunit may bind ubiquinone. The protein is NADH-quinone oxidoreductase subunit H of Frankia alni (strain DSM 45986 / CECT 9034 / ACN14a).